The chain runs to 909 residues: ABC transporter B family member 1 (909 aa).

Positions 1-36 (MTKKNFNDEENESLLETYNKQQQKQSISTTNRSDQK) are disordered. Polar residues predominate over residues 14 to 36 (LLETYNKQQQKQSISTTNRSDQK). A helical membrane pass occupies residues 85–105 (LFIQIVSLVILAGYLISINAL). A compositionally biased stretch (low complexity) spans 125–134 (TDSGSVSPTS). The segment at 125–147 (TDSGSVSPTSTPSPTPTPTPSPT) is disordered. A compositionally biased stretch (pro residues) spans 135–145 (TPSPTPTPTPS). The next 8 helical transmembrane spans lie at 182-202 (FSTF…LLLI), 206-226 (SFIY…YNVI), 275-295 (IIIV…VLHI), 347-367 (LPII…SLAM), 392-412 (LALV…SWLF), 480-500 (VILL…IVPV), 572-592 (GVFS…IVYV), and 607-627 (LTSF…ISSL). In terms of domain architecture, ABC transmembrane type-1 spans 350 to 633 (ILAAMVALVF…ISSLMTDFLK (284 aa)). The 237-residue stretch at 666–902 (IELKDVEFSY…TDGIYHNLVK (237 aa)) folds into the ABC transporter domain. 701 to 708 (GPSGGGKS) is an ATP binding site.

This sequence belongs to the ABC transporter superfamily. ABCB family.

It is found in the membrane. The polypeptide is ABC transporter B family member 1 (abcB1) (Dictyostelium discoideum (Social amoeba)).